Here is a 105-residue protein sequence, read N- to C-terminus: Large ribosomal subunit protein uL24 (105 aa).

It belongs to the universal ribosomal protein uL24 family. As to quaternary structure, part of the 50S ribosomal subunit.

One of two assembly initiator proteins, it binds directly to the 5'-end of the 23S rRNA, where it nucleates assembly of the 50S subunit. Functionally, one of the proteins that surrounds the polypeptide exit tunnel on the outside of the subunit. In Thermotoga maritima (strain ATCC 43589 / DSM 3109 / JCM 10099 / NBRC 100826 / MSB8), this protein is Large ribosomal subunit protein uL24.